Reading from the N-terminus, the 151-residue chain is Peptide deformylase (151 aa).

2 residues coordinate Fe cation: Cys88 and His130. Glu131 is an active-site residue. Fe cation is bound at residue His134.

The protein belongs to the polypeptide deformylase family. It depends on Fe(2+) as a cofactor.

It catalyses the reaction N-terminal N-formyl-L-methionyl-[peptide] + H2O = N-terminal L-methionyl-[peptide] + formate. In terms of biological role, removes the formyl group from the N-terminal Met of newly synthesized proteins. Requires at least a dipeptide for an efficient rate of reaction. N-terminal L-methionine is a prerequisite for activity but the enzyme has broad specificity at other positions. This Heliobacterium modesticaldum (strain ATCC 51547 / Ice1) protein is Peptide deformylase.